Consider the following 485-residue polypeptide: Trigger factor (485 aa).

One can recognise a PPIase FKBP-type domain in the interval 171–256 (GDRVVIDFVG…VKAVKAPGEA (86 aa)). The disordered stretch occupies residues 443–485 (FADDEDEAAEAAAPASEAGASKGVISEGVISEGSAPSHETGAA). Over residues 452 to 462 (EAAAPASEAGA) the composition is skewed to low complexity.

This sequence belongs to the FKBP-type PPIase family. Tig subfamily.

Its subcellular location is the cytoplasm. The catalysed reaction is [protein]-peptidylproline (omega=180) = [protein]-peptidylproline (omega=0). In terms of biological role, involved in protein export. Acts as a chaperone by maintaining the newly synthesized protein in an open conformation. Functions as a peptidyl-prolyl cis-trans isomerase. The polypeptide is Trigger factor (Methylobacterium sp. (strain 4-46)).